We begin with the raw amino-acid sequence, 480 residues long: Glucosylglycerol phosphorylase (480 aa).

Aspartate 190 acts as the Nucleophile in catalysis. Position 194 (tyrosine 194) interacts with substrate. Glutamate 231 functions as the Proton donor in the catalytic mechanism. Glutamine 336 provides a ligand contact to substrate.

This sequence belongs to the glycosyl hydrolase 13 family. Sucrose phosphorylase subfamily.

It carries out the reaction 2-O-(alpha-D-glucopyranosyl)glycerol + phosphate = alpha-D-glucose 1-phosphate + glycerol. In terms of biological role, catalyzes the reversible phosphorolysis of 2-O-alpha-D-glucosylglycerol with retention of the anomeric configuration, forming alpha-D-glucose 1-phosphate and glycerol. Has most likely a catabolic role, either regulating the intracellular levels of glucosylglycerol, which acts as a compatible solute, or degrading it when the environmental conditions change. Cannot catalyze the phosphorolysis of sucrose or glucosylglycerate. The chain is Glucosylglycerol phosphorylase from Marinobacter adhaerens (strain DSM 23420 / HP15).